The primary structure comprises 93 residues: Small ribosomal subunit protein bS6 (93 aa).

Belongs to the bacterial ribosomal protein bS6 family.

In terms of biological role, binds together with bS18 to 16S ribosomal RNA. The polypeptide is Small ribosomal subunit protein bS6 (rpsF) (Treponema pallidum (strain Nichols)).